The primary structure comprises 463 residues: Glycine--tRNA ligase (463 aa).

Substrate contacts are provided by arginine 98 and glutamate 174. ATP contacts are provided by residues 206–208 (RNE), 216–221 (FRTREF), 290–291 (EL), and 334–337 (GADR). A substrate-binding site is contributed by 221–225 (FEQME). 330–334 (EPSLG) is a substrate binding site.

The protein belongs to the class-II aminoacyl-tRNA synthetase family. Homodimer.

Its subcellular location is the cytoplasm. It catalyses the reaction tRNA(Gly) + glycine + ATP = glycyl-tRNA(Gly) + AMP + diphosphate. In terms of biological role, catalyzes the attachment of glycine to tRNA(Gly). This is Glycine--tRNA ligase from Staphylococcus saprophyticus subsp. saprophyticus (strain ATCC 15305 / DSM 20229 / NCIMB 8711 / NCTC 7292 / S-41).